We begin with the raw amino-acid sequence, 299 residues long: Oxygen-dependent coproporphyrinogen-III oxidase (299 aa).

Ser-92 is a binding site for substrate. His-96 and His-106 together coordinate Mn(2+). The active-site Proton donor is His-106. 108-110 (NVR) serves as a coordination point for substrate. Residues His-145 and His-175 each coordinate Mn(2+). An important for dimerization region spans residues 240–275 (YVEFNLVWDRGTLFGLQTGGRTESILMSMPPLVRWE). 258–260 (GGR) serves as a coordination point for substrate.

The protein belongs to the aerobic coproporphyrinogen-III oxidase family. As to quaternary structure, homodimer. Mn(2+) is required as a cofactor.

The protein localises to the cytoplasm. It carries out the reaction coproporphyrinogen III + O2 + 2 H(+) = protoporphyrinogen IX + 2 CO2 + 2 H2O. The protein operates within porphyrin-containing compound metabolism; protoporphyrin-IX biosynthesis; protoporphyrinogen-IX from coproporphyrinogen-III (O2 route): step 1/1. Its function is as follows. Involved in the heme biosynthesis. Catalyzes the aerobic oxidative decarboxylation of propionate groups of rings A and B of coproporphyrinogen-III to yield the vinyl groups in protoporphyrinogen-IX. This Escherichia coli O17:K52:H18 (strain UMN026 / ExPEC) protein is Oxygen-dependent coproporphyrinogen-III oxidase.